Here is a 241-residue protein sequence, read N- to C-terminus: Large ribosomal subunit protein uL3 (241 aa).

Disordered stretches follow at residues 139–164 (VSHR…KMPG) and 215–241 (DAPK…QEGV). Position 151 is an N5-methylglutamine (Q151). Low complexity predominate over residues 225–241 (ANGGEEAAAPAAEQEGV).

This sequence belongs to the universal ribosomal protein uL3 family. As to quaternary structure, part of the 50S ribosomal subunit. Forms a cluster with proteins L14 and L19. Post-translationally, methylated by PrmB.

In terms of biological role, one of the primary rRNA binding proteins, it binds directly near the 3'-end of the 23S rRNA, where it nucleates assembly of the 50S subunit. This chain is Large ribosomal subunit protein uL3, found in Rhodopseudomonas palustris (strain HaA2).